Consider the following 72-residue polypeptide: Gas vesicle protein A (72 aa).

Belongs to the gas vesicle GvpA family. The gas vesicle shell is 2 nm thick and consists of a single layer of this protein. It forms helical ribs nearly perpendicular to the long axis of the vesicle.

It is found in the gas vesicle shell. Gas vesicles are hollow, gas filled proteinaceous nanostructures found in some microorganisms. During planktonic growth they allow positioning of the organism at a favorable depth for light or nutrient acquisition. GvpA forms the protein shell. The protein is Gas vesicle protein A of Pseudanabaena galeata (strain PCC 6901).